Consider the following 561-residue polypeptide: Carboxylesterase 1E (561 aa).

A signal peptide spans 1-18; that stretch reads MCLYALILVFLAAFTAGG. N-linked (GlcNAc...) asparagine glycosylation is found at asparagine 79 and asparagine 107. Cysteine 87 and cysteine 116 are disulfide-bonded. The active-site Acyl-ester intermediate is the serine 221. Cysteines 273 and 284 form a disulfide. Residues glutamate 353 and histidine 466 each act as charge relay system in the active site. An N-linked (GlcNAc...) asparagine glycan is attached at asparagine 489. The short motif at 558–561 is the Prevents secretion from ER element; the sequence is HTEL.

Belongs to the type-B carboxylesterase/lipase family. As to expression, expressed in liver.

It is found in the endoplasmic reticulum lumen. The protein localises to the microsome membrane. The catalysed reaction is a carboxylic ester + H2O = an alcohol + a carboxylate + H(+). The enzyme catalyses all-trans-retinyl hexadecanoate + H2O = all-trans-retinol + hexadecanoate + H(+). Its function is as follows. Involved in the detoxification of xenobiotics and in the activation of ester and amide prodrugs. Hydrolyzes retinyl esters. In Rattus norvegicus (Rat), this protein is Carboxylesterase 1E (Ces1e).